The primary structure comprises 196 residues: Ribonuclease HII (196 aa).

The region spanning 13–196 (LLVAGVDEAG…SFSPLKKKLF (184 aa)) is the RNase H type-2 domain. Aspartate 19, glutamate 20, and aspartate 111 together coordinate a divalent metal cation.

The protein belongs to the RNase HII family. The cofactor is Mn(2+). Mg(2+) is required as a cofactor.

The protein localises to the cytoplasm. It catalyses the reaction Endonucleolytic cleavage to 5'-phosphomonoester.. Endonuclease that specifically degrades the RNA of RNA-DNA hybrids. The polypeptide is Ribonuclease HII (rnhB) (Aquifex aeolicus (strain VF5)).